The sequence spans 500 residues: NAD(P)H-quinone oxidoreductase chain 4, chloroplastic (500 aa).

15 consecutive transmembrane segments (helical) span residues 4–24 (FYWLTIIVVLPISAGSLIALL), 35–55 (YTICICLFELLLTTYVFCYHF), 80–100 (LGIDGLSIGPILLTGFITTLA), 113–130 (LFHFLMLAMYSGQIGSFS), 134–154 (LLLFFIMWELELIPVYLLLSM), 167–187 (FILYTAGGSIFLLMGVLGMGL), 208–228 (ALEIIFYFGFLIAYAVKSPII), 242–262 (HYSTCMLLAGILLKMGAYGLV), 274–294 (SIFSPWLMIVGTIQIIYAALT), 305–325 (IAYSSVSHMGFIIIGISSITD), 330–350 (GAILQIISHGFIGAALFFLAG), 364–384 (MGGIAILMPRIFTMFSSFSMA), 386–406 (LALPGMSGFVAEFVIFLGIIT), 416–436 (ILITFVMAIGMILTPIYSLSM), and 462–482 (IFIFMCILLPIIGIGIYPDFV).

Belongs to the complex I subunit 4 family.

The protein localises to the plastid. It is found in the chloroplast thylakoid membrane. It catalyses the reaction a plastoquinone + NADH + (n+1) H(+)(in) = a plastoquinol + NAD(+) + n H(+)(out). It carries out the reaction a plastoquinone + NADPH + (n+1) H(+)(in) = a plastoquinol + NADP(+) + n H(+)(out). The polypeptide is NAD(P)H-quinone oxidoreductase chain 4, chloroplastic (Nymphaea alba (White water-lily)).